The primary structure comprises 553 residues: HTH-type transcriptional regulator SgrR (553 aa).

The region spanning 1–113 is the HTH marR-type domain; sequence MSTSRLQQQF…RQMLLSQLGR (113 aa). Positions 26-49 form a DNA-binding region, H-T-H motif; it reads LQALAEVLNCSRRHVRSLLGKMQH. A solute-binding region spans residues 163 to 494; it reads ELEPDLSHHW…EELHQDIESW (332 aa).

Functionally, activates the small RNA gene sgrS under glucose-phosphate stress conditions as well as yfdZ. Represses its own transcription under both stress and non-stress conditions. Might act as a sensor of the intracellular accumulation of phosphoglucose by binding these molecules in its C-terminal solute-binding domain. The chain is HTH-type transcriptional regulator SgrR from Yersinia pseudotuberculosis serotype I (strain IP32953).